The chain runs to 521 residues: Chromaffin granule amine transporter (521 aa).

At 1 to 21 (MLQVVLGAPQRLLKEGRQSRK) the chain is on the cytoplasmic side. Residues 22-42 (LVLVVVFVALLLDNMLLTVVV) traverse the membrane as a helical segment. Residues 43-135 (PIVPTFLYAT…IEFLEEENVR (93 aa)) lie on the Lumenal, vesicle side of the membrane. 3 N-linked (GlcNAc...) asparagine glycosylation sites follow: N58, N87, and N104. A helical membrane pass occupies residues 136–155 (IGILFASKALMQLLVNPFVG). Residues 156–164 (PLTNRIGYH) are Cytoplasmic-facing. Residues 165 to 185 (IPMFVGFMIMFLSTLMFAFSG) traverse the membrane as a helical segment. At 186–194 (TYALLFVAR) the chain is on the lumenal, vesicle side. The helical transmembrane segment at 195-215 (TLQGIGSSFSSVAGLGMLASV) threads the bilayer. The Cytoplasmic portion of the chain corresponds to 216-224 (YTDNYERGR). A helical transmembrane segment spans residues 225–247 (AMGIALGGLALGLLVGAPFGSVM). Over 248–253 (YEFVGK) the chain is Lumenal, vesicle. The helical transmembrane segment at 254 to 276 (SSPFLILAFLALLDGALQLCILW) threads the bilayer. The Cytoplasmic segment spans residues 277–296 (PSKVSPESAMGTSLLTLLKD). The helical transmembrane segment at 297-316 (PYILVAAGSICLANMGVAIL) threads the bilayer. Over 317–332 (EPTLPIWMMQTMCSPE) the chain is Lumenal, vesicle. Residues 333–357 (WQLGLAFLPASVAYLIGTNLFGVLA) traverse the membrane as a helical segment. The Cytoplasmic portion of the chain corresponds to 358–362 (NKMGR). The chain crosses the membrane as a helical span at residues 363–383 (WLCSLVGMVAVGISLLCVPLA). Topologically, residues 384 to 394 (HNIFGLIGPNA) are lumenal, vesicle. A helical membrane pass occupies residues 395–415 (GLGFAIGMVDSSLMPIMGYLV). Residues 416–419 (DLRH) lie on the Cytoplasmic side of the membrane. A helical transmembrane segment spans residues 420 to 440 (TSVYGSVYAIADVAFCVGFAI). The Lumenal, vesicle portion of the chain corresponds to 441-445 (GPSTG). A helical transmembrane segment spans residues 446–467 (GVIVQVIGFPWLMVIIGTINII). At 468 to 521 (YAPLCCFLQNPPAKEEKRAILSQECPTETQMYTFQKPTKAFPLGENSDDPSSGE) the chain is on the cytoplasmic side.

The protein belongs to the major facilitator superfamily. Vesicular transporter family. In terms of tissue distribution, adrenal gland.

It localises to the cytoplasmic vesicle. Its subcellular location is the secretory vesicle membrane. The protein resides in the secretory vesicle. It is found in the synaptic vesicle membrane. The catalysed reaction is serotonin(in) + 2 H(+)(out) = serotonin(out) + 2 H(+)(in). It carries out the reaction (R)-noradrenaline(in) + 2 H(+)(out) = (R)-noradrenaline(out) + 2 H(+)(in). It catalyses the reaction dopamine(in) + 2 H(+)(out) = dopamine(out) + 2 H(+)(in). Strongly inhibited by reserpine, ketanserin and methamphetamine. Also inhibited weakly by tetrabenazine. In terms of biological role, electrogenic antiporter that exchanges one cationic monoamine with two intravesicular protons across the membrane of secretory and synaptic vesicles. Uses the electrochemical proton gradient established by the V-type proton-pump ATPase to accumulate high concentrations of monoamines inside the vesicles prior to their release via exocytosis. Transports catecholamines and indolamines with higher affinity for serotonin. Regulates the transvesicular monoaminergic gradient that determines the quantal size. Mediates presynaptic monoaminergic vesicle transport in the amygdala and prefrontal brain regions related with emotion processing in response to environmental stimuli. The sequence is that of Chromaffin granule amine transporter (Slc18a1) from Rattus norvegicus (Rat).